The sequence spans 161 residues: Allophycocyanin alpha chain (161 aa).

N4-methylasparagine is present on Asn-71. A (2R,3E)-phycocyanobilin-binding site is contributed by Cys-81.

This sequence belongs to the phycobiliprotein family. In terms of assembly, component of the phycobilisome. Heterodimer of an alpha and a beta chain. Contains one covalently linked phycocyanobilin chromophore.

It localises to the cellular thylakoid membrane. Its function is as follows. Light-harvesting photosynthetic bile pigment-protein from the phycobiliprotein complex. Allophycocyanin has a maximum absorption at approximately 650 nanometers. This chain is Allophycocyanin alpha chain (apcA), found in Arthrospira platensis (Spirulina platensis).